We begin with the raw amino-acid sequence, 323 residues long: Ethanolamine-phosphate cytidylyltransferase (323 aa).

It belongs to the cytidylyltransferase family.

It localises to the cytoplasm. Its subcellular location is the nucleus. It carries out the reaction phosphoethanolamine + CTP + H(+) = CDP-ethanolamine + diphosphate. The protein operates within phospholipid metabolism; phosphatidylethanolamine biosynthesis; phosphatidylethanolamine from ethanolamine: step 2/3. Functionally, ethanolamine-phosphate cytidylyltransferase which catalyzes the second step of phosphatidylethanolamine biosynthesis. Involved in the maintenance of plasma membrane and required for proper sporulation. The sequence is that of Ethanolamine-phosphate cytidylyltransferase from Saccharomyces cerevisiae (strain ATCC 204508 / S288c) (Baker's yeast).